The following is an 88-amino-acid chain: LYR motif-containing protein 2 (88 aa).

The transit peptide at 1–19 directs the protein to the mitochondrion; it reads MAVSRLPPAALSLKQFLQR.

Belongs to the complex I LYR family.

Its subcellular location is the mitochondrion. In terms of biological role, involved in efficient integration of the N-module into mitochondrial respiratory chain complex I. The protein is LYR motif-containing protein 2 (lyrm2) of Danio rerio (Zebrafish).